The following is a 958-amino-acid chain: DNA repair and recombination protein RDH54 (958 aa).

Positions 189–217 (EALSQNMGNPSPPTTSTTETVPSTKNDGG) are disordered. Residues 202 to 212 (TTSTTETVPST) are compositionally biased toward low complexity. The 189-residue stretch at 333-521 (LENDSDISGC…FTIIDFINPG (189 aa)) folds into the Helicase ATP-binding domain. 380 to 387 (IPLTGLCK) contributes to the ATP binding site. A DEGH box motif is present at residues 506–509 (NDLN). Lys-649 is covalently cross-linked (Glycyl lysine isopeptide (Lys-Gly) (interchain with G-Cter in ubiquitin)). One can recognise a Helicase C-terminal domain in the interval 665-824 (KLKVLMTLLE…DSEMRNKESS (160 aa)).

Belongs to the SNF2/RAD54 helicase family. In terms of assembly, interacts with RAD51 and DMC1.

It localises to the nucleus. The catalysed reaction is ATP + H2O = ADP + phosphate + H(+). In terms of biological role, involved in the recombinational repair of double-strand breaks (DSB) in DNA during mitosis and meiosis. Has DNA dependent ATPase activity. Promotes D-loop (displacement loop) formation with RAD51 recombinase. Modifies the topology of double-stranded DNA during the D-loop reaction to facilitate the invasion of the homologous duplex molecule by the initiating single-stranded DNA substrate. Required for adaptation from G2/M checkpoint arrest induced by a double strand break, by participating in monitoring the extent of single-stranded DNA produced by resection of DNA ends. This role is distinct from its roles in recombination. Promotes colocalization of RAD51 and DMC1 during meiotic recombination. Involved in crossover interference. In Saccharomyces cerevisiae (strain ATCC 204508 / S288c) (Baker's yeast), this protein is DNA repair and recombination protein RDH54 (RDH54).